The following is a 192-amino-acid chain: MNEKIMSDQKKIEEAVYQLLEALGEDPNREGLLDTPKRVAKMYQEMFAGLNEDPKDQFTAVFSEEHEDVVLVKDIPFYSMCEHHLVPFHGLAHVAYIPSDGCVTGLSKLARAVEVVSKRPQLQERLTVQIANALEEALKPKGVLVMIEAEHMCMTMRGIKKPGSKTVTRVVRGICQSDKETRQEIIAMIHHN.

3 residues coordinate Zn(2+): cysteine 81, histidine 84, and cysteine 153.

Belongs to the GTP cyclohydrolase I family. Toroid-shaped homodecamer, composed of two pentamers of five dimers.

It carries out the reaction GTP + H2O = 7,8-dihydroneopterin 3'-triphosphate + formate + H(+). Its pathway is cofactor biosynthesis; 7,8-dihydroneopterin triphosphate biosynthesis; 7,8-dihydroneopterin triphosphate from GTP: step 1/1. The protein is GTP cyclohydrolase 1 of Streptococcus mutans serotype c (strain ATCC 700610 / UA159).